Here is a 261-residue protein sequence, read N- to C-terminus: Serine acetyltransferase (261 aa).

This sequence belongs to the transferase hexapeptide repeat family.

Its subcellular location is the cytoplasm. It catalyses the reaction L-serine + acetyl-CoA = O-acetyl-L-serine + CoA. It functions in the pathway amino-acid biosynthesis; L-cysteine biosynthesis; L-cysteine from L-serine: step 1/2. In Buchnera aphidicola subsp. Schizaphis graminum (strain Sg), this protein is Serine acetyltransferase (cysE).